Consider the following 511-residue polypeptide: Ent-copalyl diphosphate synthase (511 aa).

The a divalent metal cation site is built by Asp291 and Asp293. The DXDD motif signature appears at 291–294 (DSDD).

Belongs to the terpene synthase family. In terms of assembly, homodimer. A divalent metal cation serves as cofactor.

It catalyses the reaction (2E,6E,10E)-geranylgeranyl diphosphate = ent-copalyl diphosphate. Its pathway is antibiotic biosynthesis. Its function is as follows. Involved in viguiepinol biosynthesis. Catalyzes the conversion of geranylgeranyl diphosphate (GGDP) into copalyl diphosphate (ent-CDP). This is Ent-copalyl diphosphate synthase from Streptomyces sp. (strain KO-3988).